The sequence spans 180 residues: Ribulose bisphosphate carboxylase small subunit, chloroplastic (180 aa).

Residues 1 to 56 (MALISSAAVTTVNRASSAQANLVAPFTGLKSSAGFPVTKKTNNDITSIASNGGRVN) constitute a chloroplast transit peptide.

Belongs to the RuBisCO small chain family. Heterohexadecamer of 8 large and 8 small subunits.

It is found in the plastid. The protein localises to the chloroplast. Functionally, ruBisCO catalyzes two reactions: the carboxylation of D-ribulose 1,5-bisphosphate, the primary event in carbon dioxide fixation, as well as the oxidative fragmentation of the pentose substrate. Both reactions occur simultaneously and in competition at the same active site. Although the small subunit is not catalytic it is essential for maximal activity. In Medicago sativa (Alfalfa), this protein is Ribulose bisphosphate carboxylase small subunit, chloroplastic.